Reading from the N-terminus, the 222-residue chain is Ras-related protein Rab11C (222 aa).

Residue 22–29 coordinates GTP; that stretch reads GDSAVGKT. The Effector region motif lies at 44 to 52; it reads SKATIGVEF. GTP is bound by residues 70-74 and 128-131; these read DTAGQ and NKTD. Residues Cys219 and Cys220 are each lipidated (S-geranylgeranyl cysteine).

This sequence belongs to the small GTPase superfamily. Rab family.

It localises to the cell membrane. The protein is Ras-related protein Rab11C (RAB11C) of Nicotiana tabacum (Common tobacco).